A 553-amino-acid chain; its full sequence is Protein spartin (553 aa).

The region spanning 15 to 96 (IRTAYKAAMT…ETELRYRLKV (82 aa)) is the MIT domain. Positions 105–130 (DDSAVEATEESRAEMDTKRPPLLAEN) are disordered. Positions 113-123 (EESRAEMDTKR) are enriched in basic and acidic residues. Residues 325–509 (IVSAADFIAS…SQNVNYITPK (185 aa)) form the Senescence domain.

In terms of assembly, interacts with Eps-15 (via C-terminal region); the interaction is required for spartin localization to the NMJ presynaptic membrane. In terms of tissue distribution, expressed in larval brain, ventral nerve cord and neuropil (at protein level).

It localises to the presynaptic cell membrane. The protein localises to the early endosome. It is found in the lipid droplet. Functionally, during postembryonic development, functions with endocytic adapter Eps-15 in neurons to restrain synaptic growth, by inhibiting BMP signaling, and to control synaptic endocytosis. Required presynaptically for neuromuscular junction (NMJ) neurotransmission. Inhibits neuronal BMP signaling by promoting endocytic internalization and subsequent endosomal trafficking of the BMP receptor wit. In this way, regulates the Fmr1 translational regulator controlling Futsch expression to modulate neuronal microtubule stability, which controls both synaptogenesis and neuronal survival. This Drosophila melanogaster (Fruit fly) protein is Protein spartin.